Here is a 504-residue protein sequence, read N- to C-terminus: Signal recognition particle subunit SRP54 (504 aa).

The segment at 1-295 (MVLADLGRKI…KTQPFISKLL (295 aa)) is NG domain. Residues 108 to 115 (GLQGSGKT), 190 to 194 (DTSGR), and 248 to 251 (TKLD) each bind GTP. The interval 296-504 (GMGDIEGLID…MKGMMGFNNM (209 aa)) is M-domain.

This sequence belongs to the GTP-binding SRP family. SRP54 subfamily. Component of a signal recognition particle (SRP) complex that consists of a 7SL RNA molecule of 300 nucleotides and six protein subunits: SRP72, SRP68, SRP54, SRP19, SRP14 and SRP9. Interacts with RNPS1. Interacts with the SRP receptor subunit SRPRA.

It localises to the nucleus speckle. The protein resides in the cytoplasm. It is found in the endoplasmic reticulum. The enzyme catalyses GTP + H2O = GDP + phosphate + H(+). Its function is as follows. Component of the signal recognition particle (SRP) complex, a ribonucleoprotein complex that mediates the cotranslational targeting of secretory and membrane proteins to the endoplasmic reticulum (ER). As part of the SRP complex, associates with the SRP receptor (SR) component SRPRA to target secretory proteins to the endoplasmic reticulum membrane. Binds to the signal sequence of presecretory proteins when they emerge from the ribosomes. Displays basal GTPase activity, and stimulates reciprocal GTPase activation of the SR subunit SRPRA. Forms a guanosine 5'-triphosphate (GTP)-dependent complex with the SR subunit SRPRA. SR compaction and GTPase mediated rearrangement of SR drive SRP-mediated cotranslational protein translocation into the ER. Requires the presence of SRP9/SRP14 and/or SRP19 to stably interact with RNA. Plays a role in proliferation and differentiation of granulocytic cells, neutrophils migration capacity and exocrine pancreas development. This is Signal recognition particle subunit SRP54 from Homo sapiens (Human).